Here is a 236-residue protein sequence, read N- to C-terminus: 2,3,4,5-tetrahydropyridine-2,6-dicarboxylate N-acetyltransferase (236 aa).

This sequence belongs to the transferase hexapeptide repeat family. DapH subfamily.

The enzyme catalyses (S)-2,3,4,5-tetrahydrodipicolinate + acetyl-CoA + H2O = L-2-acetamido-6-oxoheptanedioate + CoA. Its pathway is amino-acid biosynthesis; L-lysine biosynthesis via DAP pathway; LL-2,6-diaminopimelate from (S)-tetrahydrodipicolinate (acetylase route): step 1/3. Functionally, catalyzes the transfer of an acetyl group from acetyl-CoA to tetrahydrodipicolinate. This Clostridium botulinum (strain Okra / Type B1) protein is 2,3,4,5-tetrahydropyridine-2,6-dicarboxylate N-acetyltransferase.